An 850-amino-acid polypeptide reads, in one-letter code: PH domain-containing protein YHR131C (850 aa).

The PH domain occupies 194-306 (RIHSDLVHRS…MYLSIGISVS (113 aa)). Residues 324–338 (RRRRRRRRRRRRHTH) show a composition bias toward basic residues. 5 disordered regions span residues 324 to 348 (RRRR…GSFS), 406 to 428 (SAAS…SGCS), 451 to 494 (SSRT…GVPV), 583 to 659 (EASI…TDDS), and 793 to 850 (TTKD…QITA). Residues 406–416 (SAASGESSDNS) are compositionally biased toward low complexity. Residues 417 to 428 (TLGSTRSLSGCS) show a composition bias toward polar residues. Residues 479 to 489 (HHESSGGDHPE) are compositionally biased toward basic and acidic residues. Residues 605 to 619 (ESATDLSQSSRSLCL) are compositionally biased toward polar residues. Composition is skewed to acidic residues over residues 626 to 658 (INDD…DTDD) and 799 to 850 (DHGE…QITA).

The protein resides in the cytoplasm. The sequence is that of PH domain-containing protein YHR131C from Saccharomyces cerevisiae (strain ATCC 204508 / S288c) (Baker's yeast).